The chain runs to 160 residues: MGGYTYENEFTSDIPAPKLFKAFVLDADNLIPKIAPQAIKCAEILEGDGGPGTIKKITFGEGSHYGYVKHKIHSIDKENHTYSYSLIEGDALSDNIEKIDYETKLVSAPHGGTIIKTTSKYHTKGDVEIKEEHVKAGKEKASHLFKLIEGYLKDHPSEYN.

This sequence belongs to the BetVI family. As to quaternary structure, monomer.

This Fragaria ananassa (Strawberry) protein is Major strawberry allergen Fra a 1-D.